Here is a 141-residue protein sequence, read N- to C-terminus: HTH-type transcriptional repressor NsrR (141 aa).

One can recognise an HTH rrf2-type domain in the interval 2-129 (QLTSFTDYAL…DDCTIEELLS (128 aa)). A DNA-binding region (H-T-H motif) is located at residues 28–51 (ITEVTDLFGVSRNHMVKVINRLGQ). Positions 91, 96, and 102 each coordinate [2Fe-2S] cluster.

[2Fe-2S] cluster serves as cofactor.

Its function is as follows. Nitric oxide-sensitive repressor of genes involved in protecting the cell against nitrosative stress. May require iron for activity. The sequence is that of HTH-type transcriptional repressor NsrR from Vibrio campbellii (strain ATCC BAA-1116).